A 4351-amino-acid chain; its full sequence is Protocadherin Fat 2 (4351 aa).

A signal peptide spans methionine 1–cysteine 18. At glutamate 19–glutamate 4050 the chain is on the extracellular side. Cadherin domains are found at residues threonine 34–phenylalanine 148 and serine 149–isoleucine 256. N-linked (GlcNAc...) asparagine glycosylation is found at asparagine 39, asparagine 210, asparagine 280, and asparagine 330. Cadherin domains are found at residues glutamate 363–phenylalanine 458, asparagine 459–phenylalanine 564, glutamate 565–glutamine 669, aspartate 716–phenylalanine 820, proline 821–cysteine 925, isoleucine 926–phenylalanine 1032, serine 1033–phenylalanine 1142, serine 1138–phenylalanine 1242, serine 1243–proline 1346, aspartate 1350–phenylalanine 1448, leucine 1449–phenylalanine 1555, threonine 1556–phenylalanine 1660, serine 1661–phenylalanine 1758, leucine 1759–phenylalanine 1872, serine 1873–phenylalanine 1968, aspartate 1969–phenylalanine 2070, glutamine 2071–phenylalanine 2171, glutamine 2172–phenylalanine 2272, serine 2273–phenylalanine 2379, arginine 2380–phenylalanine 2481, glutamine 2482–phenylalanine 2585, lysine 2586–phenylalanine 2692, serine 2693–phenylalanine 2799, glutamate 2800–phenylalanine 2908, alanine 2909–cysteine 3013, serine 3014–phenylalanine 3115, phenylalanine 3116–phenylalanine 3220, leucine 3221–phenylalanine 3323, threonine 3324–phenylalanine 3428, phenylalanine 3429–threonine 3533, and leucine 3534–glutamine 3631. Asparagine 459, asparagine 568, asparagine 627, and asparagine 789 each carry an N-linked (GlcNAc...) asparagine glycan. N-linked (GlcNAc...) asparagine glycosylation is present at asparagine 996. 3 N-linked (GlcNAc...) asparagine glycosylation sites follow: asparagine 1175, asparagine 1276, and asparagine 1417. Asparagine 1899, asparagine 1998, asparagine 2007, asparagine 2102, asparagine 2165, asparagine 2183, asparagine 2325, asparagine 2368, asparagine 2387, asparagine 2430, asparagine 2470, asparagine 2547, and asparagine 2597 each carry an N-linked (GlcNAc...) asparagine glycan. N-linked (GlcNAc...) asparagine glycans are attached at residues asparagine 3127, asparagine 3278, and asparagine 3312. N-linked (GlcNAc...) asparagine glycans are attached at residues asparagine 3432, asparagine 3603, asparagine 3770, asparagine 3774, asparagine 3815, asparagine 3842, asparagine 3875, and asparagine 3906. The Laminin G-like domain maps to glycine 3775–cysteine 3946. Intrachain disulfides connect cysteine 3914–cysteine 3946, cysteine 3953–cysteine 3964, cysteine 3958–cysteine 3974, and cysteine 3976–cysteine 3985. EGF-like domains lie at proline 3949 to glutamate 3986 and glycine 3988 to glutamate 4024. The N-linked (GlcNAc...) asparagine glycan is linked to asparagine 3991. 3 disulfide bridges follow: cysteine 3992-cysteine 4003, cysteine 3997-cysteine 4012, and cysteine 4014-cysteine 4023. Residues phenylalanine 4051 to tyrosine 4071 traverse the membrane as a helical segment. Residues cysteine 4072–phenylalanine 4351 are Cytoplasmic-facing. The disordered stretch occupies residues aspartate 4313 to glutamate 4340.

As to quaternary structure, homodimer.

The protein resides in the cell membrane. It localises to the cell junction. It is found in the golgi apparatus. The protein localises to the trans-Golgi network. Involved in the regulation of cell migration. May be involved in mediating the organization of the parallel fibers of granule cells during cerebellar development. This Mus musculus (Mouse) protein is Protocadherin Fat 2 (Fat2).